A 688-amino-acid polypeptide reads, in one-letter code: Two-component response regulator ORR23 (688 aa).

One can recognise a Response regulatory domain in the interval 25–140 (RVLAVDDDPV…ELRNIWQHVI (116 aa)). Asp-76 bears the 4-aspartylphosphate mark. A disordered region spans residues 161–212 (PPNADSDHVHGHVTCGSPDQSGRPSKKRKEYCSEEEDEGEVNTQDIDDPSAP). Positions 193–208 (SEEEDEGEVNTQDIDD) are enriched in acidic residues. The segment at residues 211–270 (APKKPRVVWSVELHRKFVAAVNQLGIDKAVPKRILELMNVEKLTRENVASHLQKYRLYLK) is a DNA-binding region (myb-like GARP).

Belongs to the ARR family. Type-B subfamily. Two-component system major event consists of a His-to-Asp phosphorelay between a sensor histidine kinase (HK) and a response regulator (RR). In plants, the His-to-Asp phosphorelay involves an additional intermediate named Histidine-containing phosphotransfer protein (HPt). This multistep phosphorelay consists of a His-Asp-His-Asp sequential transfer of a phosphate group between first a His and an Asp of the HK protein, followed by the transfer to a conserved His of the HPt protein and finally the transfer to an Asp in the receiver domain of the RR protein.

It localises to the nucleus. Transcriptional activator that binds specific DNA sequence. Functions as a response regulator involved in His-to-Asp phosphorelay signal transduction system. Phosphorylation of the Asp residue in the receiver domain activates the ability of the protein to promote the transcription of target genes. May directly activate some type-A response regulators in response to cytokinins. The sequence is that of Two-component response regulator ORR23 from Oryza sativa subsp. japonica (Rice).